The sequence spans 52 residues: UPF0181 protein CGSHiGG_01050 (52 aa).

It belongs to the UPF0181 family.

This is UPF0181 protein CGSHiGG_01050 from Haemophilus influenzae (strain PittGG).